The sequence spans 203 residues: MTQDQTAEQMPAAESADQSADQGPAAESAAPPAVDSERIKELEAEIAKLKNDVLYAKAETENTRRRLEQQAEDRGRYAISNIAKDVLSVADNLRRALDSVPASAREGNESLTALTTGVEMTERELLATFERYGIKLVAAQGERFDPNLHQAMMEMEDPSQIEGTVVLVMQAGYTLHDRLLRPALVGVAKGGPKSGGNNVDTKV.

Residues 1–38 form a disordered region; it reads MTQDQTAEQMPAAESADQSADQGPAAESAAPPAVDSER.

Belongs to the GrpE family. Homodimer.

It is found in the cytoplasm. Participates actively in the response to hyperosmotic and heat shock by preventing the aggregation of stress-denatured proteins, in association with DnaK and GrpE. It is the nucleotide exchange factor for DnaK and may function as a thermosensor. Unfolded proteins bind initially to DnaJ; upon interaction with the DnaJ-bound protein, DnaK hydrolyzes its bound ATP, resulting in the formation of a stable complex. GrpE releases ADP from DnaK; ATP binding to DnaK triggers the release of the substrate protein, thus completing the reaction cycle. Several rounds of ATP-dependent interactions between DnaJ, DnaK and GrpE are required for fully efficient folding. The polypeptide is Protein GrpE (Paramagnetospirillum magneticum (strain ATCC 700264 / AMB-1) (Magnetospirillum magneticum)).